The sequence spans 918 residues: Pre-pro-metalloprotease PrtV (918 aa).

The signal sequence occupies residues 1–23 (MKTIKKTLLAAAIASFFSSGLYA). A propeptide spanning residues 24–105 (QTPIDLGVVN…QKGPHKARVF (82 aa)) is cleaved from the precursor. Zn(2+) is bound at residue His330. Glu331 is a catalytic residue. Residue His334 coordinates Zn(2+). 4 residues coordinate Ca(2+): Ile757, Asp782, Asp821, and Asp825. PKD domains follow at residues 758 to 835 (APVA…TIKV) and 855 to 918 (VTMW…KVKL). The propeptide occupies 835-918 (VDTPNALPQA…VTTITIKVKL (84 aa)).

This sequence belongs to the peptidase M6 family. The cofactor is Zn(2+). Post-translationally, prtV is expressed as an inactive, multidomain, 102 kDa pre-pro-metalloprotease. To form a catalytically active protease, PrtV is first secreted, and then it undergoes N- and C-terminal cleavages during envelope translocation to yield a 81 kDa pro-metalloprotease. Outside the cell, the 81 kDa pro-metalloprotease undergoes an auto-cleavage. The two major products of autoproteolysis (37 kDa and 18 kDa) together form the so called 55 kDa active complex.

It is found in the secreted. Its activity is regulated as follows. Calcium plays an important structural role, providing stability to this protein in the cytoplasm. Outside the cell, the decrease of the calcium concentration triggers the autoproteolysis. PrtV activity is increased by 25 mM of Sr(2+) or Mg(2+) and to some extent by Ba(2+); however, Ba(2+) inhibits PrtV at higher concentrations. Completely inhibited by EDTA and 1,10-phenanthroline. Functionally, metalloprotease that exhibits a cytotoxic effect leading to cell death. In host tissues, it could play a role in pathogenesis by modulating the stability of the extracellular matrix components such as fibronectin and fibrinogen. Also able to cleave plasminogen. The sequence is that of Pre-pro-metalloprotease PrtV from Vibrio cholerae serotype O1 (strain ATCC 39315 / El Tor Inaba N16961).